Consider the following 266-residue polypeptide: Small ribosomal subunit protein uS2 (266 aa).

Residues 247–266 form a disordered region; the sequence is EGENNYSNNRSWNKPERTNN. A compositionally biased stretch (polar residues) spans 249-258; the sequence is ENNYSNNRSW.

The protein belongs to the universal ribosomal protein uS2 family.

This chain is Small ribosomal subunit protein uS2, found in Mesoplasma florum (strain ATCC 33453 / NBRC 100688 / NCTC 11704 / L1) (Acholeplasma florum).